Consider the following 389-residue polypeptide: MEGELAANWSTEAVNSSAAPPGAEGNCTAGPPRRNEALARVEVAVLCLILFLALSGNACVLLALRTTRHKHSRLFFFMKHLSIADLVVAVFQVLPQLLWDITFRFYGPDLLCRLVKYLQVVGMFASTYLLLLMSLDRCLAICQPLRSLRRRTDRLAVLATWLGCLVASAPQVHIFSLREVADGVFDCWAVFIQPWGPKAYITWITLAVYIVPVIVLAACYGLISFKIWQNLRLKTAAAAAAEAPEGAAAGDGGRMALARVSSVKLISKAKIRTVKMTFIIVLAFIVCWTPFFFVQMWSVWDANAPKEASAFIIVMLLASLNSCCNPWIYMLFTGHLFHELVQRFLCCSASYLKGNRLGETSTSKKSNSSSFVLSHRSSSQRSCSQPSTA.

A disordered region spans residues 1–27 (MEGELAANWSTEAVNSSAAPPGAEGNC). Residues 1–38 (MEGELAANWSTEAVNSSAAPPGAEGNCTAGPPRRNEAL) are Extracellular-facing. N8, N15, and N26 each carry an N-linked (GlcNAc...) asparagine glycan. Over residues 8-18 (NWSTEAVNSSA) the composition is skewed to polar residues. The helical transmembrane segment at 39–63 (ARVEVAVLCLILFLALSGNACVLLA) threads the bilayer. The Cytoplasmic portion of the chain corresponds to 64 to 74 (LRTTRHKHSRL). The helical transmembrane segment at 75–97 (FFFMKHLSIADLVVAVFQVLPQL) threads the bilayer. Over 98-113 (LWDITFRFYGPDLLCR) the chain is Extracellular. A disulfide bridge links C112 with C187. Residues 114 to 135 (LVKYLQVVGMFASTYLLLLMSL) form a helical membrane-spanning segment. At 136-154 (DRCLAICQPLRSLRRRTDR) the chain is on the cytoplasmic side. Residues 155 to 175 (LAVLATWLGCLVASAPQVHIF) form a helical membrane-spanning segment. Over 176 to 202 (SLREVADGVFDCWAVFIQPWGPKAYIT) the chain is Extracellular. The chain crosses the membrane as a helical span at residues 203-225 (WITLAVYIVPVIVLAACYGLISF). The Cytoplasmic segment spans residues 226-275 (KIWQNLRLKTAAAAAAEAPEGAAAGDGGRMALARVSSVKLISKAKIRTVK). The chain crosses the membrane as a helical span at residues 276–294 (MTFIIVLAFIVCWTPFFFV). The Extracellular segment spans residues 295–309 (QMWSVWDANAPKEAS). The helical transmembrane segment at 310–332 (AFIIVMLLASLNSCCNPWIYMLF) threads the bilayer. Residues 333–389 (TGHLFHELVQRFLCCSASYLKGNRLGETSTSKKSNSSSFVLSHRSSSQRSCSQPSTA) lie on the Cytoplasmic side of the membrane. Residues 358–389 (GETSTSKKSNSSSFVLSHRSSSQRSCSQPSTA) form a disordered region. Positions 360–389 (TSTSKKSNSSSFVLSHRSSSQRSCSQPSTA) are enriched in low complexity. Phosphoserine occurs at positions 366 and 368.

Belongs to the G-protein coupled receptor 1 family. Vasopressin/oxytocin receptor subfamily.

Its subcellular location is the cell membrane. Functionally, receptor for oxytocin. The activity of this receptor is mediated by G proteins which activate a phosphatidylinositol-calcium second messenger system. The sequence is that of Oxytocin receptor (OXTR) from Macaca mulatta (Rhesus macaque).